We begin with the raw amino-acid sequence, 137 residues long: Nucleoside diphosphate kinase (137 aa).

The ATP site is built by Lys10, Phe58, Arg86, Thr92, Arg103, and Asn113. His116 functions as the Pros-phosphohistidine intermediate in the catalytic mechanism.

The protein belongs to the NDK family. In terms of assembly, homotetramer. Requires Mg(2+) as cofactor.

The protein localises to the cytoplasm. The catalysed reaction is a 2'-deoxyribonucleoside 5'-diphosphate + ATP = a 2'-deoxyribonucleoside 5'-triphosphate + ADP. It catalyses the reaction a ribonucleoside 5'-diphosphate + ATP = a ribonucleoside 5'-triphosphate + ADP. Functionally, major role in the synthesis of nucleoside triphosphates other than ATP. The ATP gamma phosphate is transferred to the NDP beta phosphate via a ping-pong mechanism, using a phosphorylated active-site intermediate. The sequence is that of Nucleoside diphosphate kinase from Helicobacter pylori (strain P12).